A 150-amino-acid chain; its full sequence is UPF0178 protein PSEEN5341 (150 aa).

The protein belongs to the UPF0178 family.

This Pseudomonas entomophila (strain L48) protein is UPF0178 protein PSEEN5341.